A 342-amino-acid polypeptide reads, in one-letter code: Ribosomal RNA small subunit methyltransferase C (342 aa).

Belongs to the methyltransferase superfamily. RsmC family. Monomer.

Its subcellular location is the cytoplasm. It catalyses the reaction guanosine(1207) in 16S rRNA + S-adenosyl-L-methionine = N(2)-methylguanosine(1207) in 16S rRNA + S-adenosyl-L-homocysteine + H(+). In terms of biological role, specifically methylates the guanine in position 1207 of 16S rRNA in the 30S particle. The chain is Ribosomal RNA small subunit methyltransferase C from Salmonella newport (strain SL254).